A 4660-amino-acid polypeptide reads, in one-letter code: Low-density lipoprotein receptor-related protein 2 (4660 aa).

An N-terminal signal peptide occupies residues 1 to 25 (MERGAAAAAWMLLLAIAACLAPVSG). Residues 26-4425 (QECGSGNFRC…LSRGIPPGTT (4400 aa)) lie on the Extracellular side of the membrane. LDL-receptor class A domains lie at 27-63 (ECGSGNFRCDNGYCIPASWRCDGTRDCLDDTDEIGCP), 66-104 (SCGSGFFLCPAEGTCIPSSWVCDQDKDCSDGADEQQNCP), 107-143 (TCSSQQLTCSNGQCVPIEYRCDHVSDCPDGSDERNCY), 146-180 (TCDQLTCANGACYNTSQKCDHKVDCRDSSDEANCT), 182-218 (LCSQKEFQCGSGECILRAYVCDHDNDCEDNSDEHNCN), 221-257 (TCGGHQFTCSNGQCINQNWVCDGDDDCQDSGDEDGCE), and 264-307 (TCYP…RYCG). 21 disulfides stabilise this stretch: Cys28-Cys40, Cys35-Cys53, Cys47-Cys62, Cys67-Cys80, Cys74-Cys93, Cys87-Cys103, Cys108-Cys120, Cys115-Cys133, Cys127-Cys142, Cys147-Cys157, Cys152-Cys170, Cys164-Cys179, Cys183-Cys195, Cys190-Cys208, Cys202-Cys217, Cys222-Cys234, Cys229-Cys247, Cys241-Cys256, Cys265-Cys278, Cys272-Cys291, and Cys285-Cys306. N-linked (GlcNAc...) asparagine glycosylation is found at Asn159 and Asn178. N-linked (GlcNAc...) asparagine glycans are attached at residues Asn299, Asn340, Asn387, and Asn462. 4 LDL-receptor class B repeats span residues 435 to 477 (HRVF…DWIN), 478 to 520 (NKLY…DPTV), 521 to 567 (GYLF…DLVS), and 568 to 612 (KRVY…FEEH). N-linked (GlcNAc...) asparagine glycosylation occurs at Asn657. LDL-receptor class B repeat units follow at residues 752-794 (STIF…DWIS), 795-836 (RNLY…HPAA), 837-880 (GYMF…DWST), and 881-924 (SRLY…FKDN). N-linked (GlcNAc...) asparagine glycosylation occurs at Asn865. The region spanning 1024–1060 (QCGSSSFPCNNGKCVPSIFRCDGVDDCHDNSDEHQCG) is the LDL-receptor class A 8 domain. 3 cysteine pairs are disulfide-bonded: Cys1025–Cys1037, Cys1032–Cys1050, and Cys1044–Cys1059. N-linked (GlcNAc...) asparagine glycosylation is present at Asn1063. LDL-receptor class A domains are found at residues 1065 to 1102 (TCSSSAFTCVHGGQCIPGQWRCDKQNDCLDGSDEQNCP), 1109 to 1145 (TCPPTSFTCDNHMCIPKEWVCDTDNDCSDGSDEKNCQ), 1149 to 1185 (TCHPTQFRCPDHRCISPLYVCDGDKDCVDGSDEAGCV), 1187 to 1224 (NCTSSQFKCADGSSCINSRYRCDGVYDCKDNSDEAGCP), 1230 to 1268 (MCHPDEFQCQGDGTCIPNTWECDGHPDCIQGSDEHNGCV), 1271 to 1307 (TCSPSHFLCDNGNCIYNSWVCDGDNDCRDMSDEKDCP), and 1312 to 1350 (HCPSSQWQCPGYSICVNLSALCDGVFDCPNGTDESPLCN). Cystine bridges form between Cys1066–Cys1079, Cys1073–Cys1092, Cys1086–Cys1101, Cys1110–Cys1122, Cys1117–Cys1135, Cys1129–Cys1144, Cys1150–Cys1162, Cys1157–Cys1175, and Cys1169–Cys1184. Residues Trp1127, Asp1130, Asp1132, Asp1134, Asp1140, and Glu1141 each coordinate Ca(2+). The N-linked (GlcNAc...) asparagine glycan is linked to Asn1187. Cystine bridges form between Cys1188-Cys1201, Cys1195-Cys1214, Cys1208-Cys1223, Cys1231-Cys1244, Cys1238-Cys1257, Cys1251-Cys1267, Cys1272-Cys1284, Cys1279-Cys1297, Cys1291-Cys1306, Cys1313-Cys1326, Cys1320-Cys1339, Cys1333-Cys1349, Cys1354-Cys1365, Cys1361-Cys1374, Cys1376-Cys1389, Cys1395-Cys1405, Cys1401-Cys1414, and Cys1416-Cys1429. 6 residues coordinate Ca(2+): Tyr1206, Asp1209, Val1211, Asp1213, Asp1219, and Glu1220. Asn1328 and Asn1341 each carry an N-linked (GlcNAc...) asparagine glycan. The region spanning 1350-1390 (NQDSCLHFNGGCTHRCIQGPFGATCVCPIGYQLANDTKTCE) is the EGF-like 1 domain. Asn1384 is a glycosylation site (N-linked (GlcNAc...) asparagine). Positions 1391 to 1430 (DVNECDIPGFCSQHCVNMRGSFRCACDPEYTLESDGRTCK) constitute an EGF-like 2; calcium-binding domain. Asn1451, Asn1497, and Asn1551 each carry an N-linked (GlcNAc...) asparagine glycan. 5 LDL-receptor class B repeats span residues 1479-1521 (GRVF…DWIG), 1522-1564 (RNIY…DPRM), 1567-1610 (NVMF…DYPN), 1611-1655 (RLIY…FEDS), and 1656-1696 (VFWT…IHPS). N-linked (GlcNAc...) asparagine glycosylation is found at Asn1676, Asn1733, and Asn1811. 10 LDL-receptor class B repeats span residues 1791–1833 (QFIY…DWVS), 1834–1883 (RNIY…DPAR), 1884–1931 (GKLY…DIQE), 1932–1973 (QKLY…HGSF), 1974–2014 (LYYS…YHHR), 2108–2157 (GFIY…DWVA), 2158–2202 (GNLY…DPKH), 2203–2246 (RYLF…DHDT), 2247–2290 (GYIY…FGES), and 2291–2333 (IIWV…FDEH). Asn2131, Asn2134, Asn2178, and Asn2225 each carry an N-linked (GlcNAc...) asparagine glycan. Asn2396 is a glycosylation site (N-linked (GlcNAc...) asparagine). LDL-receptor class B repeat units lie at residues 2432 to 2478 (NRIF…DWIN), 2479 to 2519 (RRIY…DPCR), 2520 to 2563 (GYMY…DLET), 2564 to 2605 (DLLY…YGQY), and 2606 to 2647 (IYWT…VVKT). N-linked (GlcNAc...) asparagine glycans are attached at residues Asn2488 and Asn2548. LDL-receptor class A domains follow at residues 2700-2738 (RCNQFQFTCLNGRCISQDWKCDNDNDCGDGSDELPTVCA), 2741-2777 (TCRSTAFTCANGRCVPYHYRCDFYNDCGDNSDEAGCL), 2780-2819 (SCNSTTEFTCSNGRCIPLSYVCNGINNCHDNDTSDEKNCP), 2822-2861 (TCQPDFAKCQTTNICVPRAFLCDGDNDCGDGSDENPIYCA), 2864-2902 (TCRSNEFQCVSPHRCIPSYWFCDGEADCVDSSDEPDTCG), 2907-2946 (SCSANQFHCDNGRCISSSWVCDGDNDCGDMSDEDQRHHCE), 2949-2991 (NCSS…QNCT), 2994-3030 (ACSTGEFSCANGRCIRQSFRCDRRNDCGDYSDERGCS), 3033-3071 (PCRDDQFTCQNGQCITKLYVCDEDNDCGDGSDEQEHLCH), and 3076-3112 (TCPPHQFRCDNGHCIEMGTVCNHVDDCSDNSDEKGCG). Disulfide bonds link Cys2701/Cys2713, Cys2708/Cys2726, Cys2720/Cys2737, Cys2742/Cys2754, Cys2749/Cys2767, Cys2761/Cys2776, Cys2781/Cys2794, Cys2789/Cys2807, Cys2801/Cys2818, Cys2823/Cys2836, Cys2830/Cys2849, Cys2843/Cys2860, Cys2865/Cys2878, Cys2872/Cys2891, Cys2885/Cys2901, Cys2908/Cys2920, Cys2915/Cys2933, and Cys2927/Cys2945. N-linked (GlcNAc...) asparagine glycosylation is present at Asn2782. An N-linked (GlcNAc...) asparagine glycan is attached at Asn2810. A glycan (N-linked (GlcNAc...) asparagine) is linked at Asn2949. Cystine bridges form between Cys2950/Cys2967, Cys2957/Cys2980, Cys2974/Cys2990, Cys2995/Cys3007, Cys3002/Cys3020, Cys3014/Cys3029, Cys3034/Cys3046, Cys3041/Cys3059, Cys3053/Cys3070, Cys3077/Cys3089, Cys3084/Cys3102, Cys3096/Cys3111, Cys3116/Cys3128, Cys3124/Cys3137, Cys3139/Cys3152, Cys3158/Cys3169, Cys3165/Cys3178, and Cys3180/Cys3193. Residue Asn2989 is glycosylated (N-linked (GlcNAc...) asparagine). The 42-residue stretch at 3112 to 3153 (GINECQDSSISHCDHNCTDTITSFYCSCLPGYKLMSDKRTCV) folds into the EGF-like 3 domain. N-linked (GlcNAc...) asparagine glycosylation occurs at Asn3127. Positions 3154–3194 (DIDECKETPQLCSQKCENVIGSYICKCAPGYIREPDGKSCR) constitute an EGF-like 4; calcium-binding domain. N-linked (GlcNAc...) asparagine glycans are attached at residues Asn3213, Asn3259, Asn3317, and Asn3357. LDL-receptor class B repeat units follow at residues 3241–3283 (ERLY…DWVS), 3284–3326 (RKLY…ENPR), 3335–3378 (GYVY…DYTN), 3379–3421 (DLLY…FEDT), and 3422–3462 (VFWT…LHPY). The N-linked (GlcNAc...) asparagine glycan is linked to Asn3448. 8 consecutive LDL-receptor class A domains span residues 3513 to 3551 (MCSSTQFLCGNNEKCIPIWWKCDGQKDCSDGSDESDLCP), 3554 to 3592 (FCRLGQFQCRDGNCTSPQALCNARQDCADGSDEDRVLCE), 3595 to 3633 (RCEANEWQCANKRCIPEYWQCDSVDDCLDNSDEDPSHCA), 3636 to 3674 (TCRPGQFKCNNGRCIPQSWKCDVDNDCGDYSDEPIHECM), 3679 to 3717 (NCDNHTEFSCKTNYRCIPQWAVCNGFDDCRDNSDEQGCE), 3720 to 3757 (PCHPSGDFRCGNHHCIPLRWKCDGIDDCGDNSDEESCV), 3760 to 3796 (ECTESEFRCADQQCIPSRWVCDQENDCGDNSDERDCE), and 3799 to 3835 (TCHPEHFQCTSGHCVPKALACDGRADCLDASDESACP). Disulfide bonds link Cys3514–Cys3527, Cys3521–Cys3540, Cys3534–Cys3550, Cys3555–Cys3567, Cys3562–Cys3580, Cys3574–Cys3591, Cys3596–Cys3608, Cys3603–Cys3621, Cys3615–Cys3632, Cys3637–Cys3649, Cys3644–Cys3662, Cys3656–Cys3673, Cys3680–Cys3694, Cys3688–Cys3707, Cys3701–Cys3716, Cys3721–Cys3734, Cys3729–Cys3747, Cys3741–Cys3756, Cys3761–Cys3773, Cys3768–Cys3786, Cys3780–Cys3795, Cys3800–Cys3812, Cys3807–Cys3825, and Cys3819–Cys3834. An N-linked (GlcNAc...) asparagine glycan is attached at Asn3566. Residue Asn3682 is glycosylated (N-linked (GlcNAc...) asparagine). An N-linked (GlcNAc...) asparagine glycan is attached at Asn3840. LDL-receptor class A domains are found at residues 3843-3881 (YCPAAMFECKNHVCIQSFWICDGENDCVDGSDEEIHLCF), 3884-3923 (PCESPQRFRCDNSRCIYGHQLCNGVDDCGDGSDEKEEHCR), and 3929-3965 (PCTDTEYKCSNGNCVSQHYVCDNVDDCGDLSDETGCN). 9 disulfides stabilise this stretch: Cys3844/Cys3856, Cys3851/Cys3869, Cys3863/Cys3880, Cys3885/Cys3898, Cys3893/Cys3911, Cys3905/Cys3922, Cys3930/Cys3942, Cys3937/Cys3955, and Cys3949/Cys3964. Residues Asn3969 and Asn3980 are each glycosylated (N-linked (GlcNAc...) asparagine). Residues 4009 to 4050 (DINECEEFGICPQSCRNSKGSYECFCVDGFKSMSTHYGERCA) enclose the EGF-like 5; calcium-binding domain. 3 disulfide bridges follow: Cys4013–Cys4023, Cys4019–Cys4032, and Cys4034–Cys4049. Asn4070 carries an N-linked (GlcNAc...) asparagine glycan. LDL-receptor class B repeat units lie at residues 4156-4198 (RHIY…NPKL), 4199-4242 (GLMF…DYLN), and 4244-4285 (DRIY…FEDQ). Asn4329 is a glycosylation site (N-linked (GlcNAc...) asparagine). The 35-residue stretch at 4379 to 4413 (MPSPCRCMHGGSCYFDENDLPKCKCSSGYSGEYCE) folds into the EGF-like 6 domain. 3 disulfide bridges follow: Cys4383–Cys4391, Cys4385–Cys4401, and Cys4403–Cys4412. A helical membrane pass occupies residues 4426-4446 (MALLLTFAMVIIVGALVLVGF). Topologically, residues 4447 to 4660 (FHYRKTGSLL…ANLVKEDSDV (214 aa)) are cytoplasmic. An SH3-binding motif is present at residues 4454 to 4463 (SLLPSLPKLP). A PxLPxI/L motif 1; mediates interaction with ANKRA2 motif is present at residues 4457 to 4462 (PSLPKL). Positions 4460–4465 (PKLPSL) match the PxLPxI/L motif 2; mediates interaction with ANKRA2 motif. A phosphoserine mark is found at Ser4464 and Ser4467. Residues 4522–4527 (FENPMY) carry the Endocytosis signal motif. The tract at residues 4558-4660 (QNYGRSIDPS…ANLVKEDSDV (103 aa)) is disordered. At Ser4577 the chain carries Phosphoserine. The tract at residues 4597 to 4610 (QTTNFENPIYAEMD) is interaction with DAB2. An NPXY motif motif is present at residues 4603-4606 (NPIY). The SH2-binding motif lies at 4606 to 4609 (YAEM). The SH3-binding motif lies at 4619–4630 (VAPPPSPSLPAK). Position 4624 is a phosphoserine (Ser4624). Positions 4627-4636 (LPAKASKRSS) are enriched in low complexity. Residue Thr4637 is modified to Phosphothreonine. At Ser4658 the chain carries Phosphoserine.

It belongs to the LDLR family. As to quaternary structure, binds plasminogen, extracellular matrix components, plasminogen activator-plasminogen activator inhibitor type I complex, apolipoprotein E-enriched beta-VLDL, lipoprotein lipase, lactoferrin, CLU/clusterin and calcium. Forms a multimeric complex together with LRPAP1. Interacts (via PxLPxI/L motif) with ANKRA2 (via ankyrin repeats). Interacts with LRP2BP. Interacts (via NPXY motif) with DAB2; the interaction is not affected by tyrosine phosphorylation of the NPXY motif. Interacts with MB. Interacts with BMP4. Interacts with the Sonic hedgehog protein N-product which is the active product of SHH. Interacts with CST3 in a calcium-dependent manner. Interacts with the vitamin-D binding protein GC/DBP. Interacts with sex hormone-binding protein SHBG. Interacts with angiotensin-2. Also interacts with angiotensin 1-7. Interacts with APOM. Interacts with selenoprotein SEPP1. Interacts with LEP. Interacts with ALB. Interacts with the antiapoptotic protein BIRC5/survivin. Interacts with matrix metalloproteinase MMP2 in complex with metalloproteinase inhibitor TIMP1. In neurons, forms a trimeric complex with APP and APPB1/FE65. Interacts with LDLRAP1/ARH; mediates trafficking of LRP2 to the endocytic recycling compartment. Does not interact with beta-amyloid protein 40 alone but interacts with the complex composed of beta-amyloid protein 40 and CLU/APOJ. Interacts with MDK. A fraction undergoes proteolytic cleavage of the extracellular domain at the cell membrane to generate a cytoplasmic tail fragment. This is internalized into the early endosome from where it trafficks in an LDLRAP1/ARH-dependent manner to the endocytic recycling compartment (ERC). In the ERC, it is further cleaved by gamma-secretase to release a fragment which translocates to the nucleus and mediates transcriptional repression. Post-translationally, N-glycosylation is required for ligand binding. Contains core-fucosylated N-glycans in kidney proximal convoluted tubules (PCTs) and hybrid-type N-glycans in proximal straight tubules (PSTs). Interacts with ligands in a glycoform-dependent manner. Retinol-binding protein and the vitamin D carrier GC/DBP are endocytosed primarily by PCTs, albumin is endocytosed equally by PCTs and PSTs, and the aminoglycoside kanamycin is endocytosed primarily by PSTs. In the inner ear, strongly expressed in the marginal cells of the stria vascularis (at protein level). In the female reproductive tract, expressed on the luminal side of the uterine epithelium (at protein level). In the adult brain, expressed in ependymal cells of the lateral ventricles where expression is restricted to the ependyma that faces the stem cell niche (at protein level). Expressed in neurons throughout the brain including in the hippocampus, limbic cortices and cerebellum (at protein level). In the developing optic nerve, expressed exclusively in astrocytes at 14.5 dpc, 16.5 dpc and 18.5 dpc (at protein level).

The protein resides in the apical cell membrane. It is found in the endosome lumen. The protein localises to the membrane. It localises to the coated pit. Its subcellular location is the cell projection. The protein resides in the dendrite. It is found in the axon. Its function is as follows. Multiligand endocytic receptor. Acts together with CUBN to mediate endocytosis of high-density lipoproteins. Mediates receptor-mediated uptake of polybasic drugs such as aprotinin, aminoglycosides and polymyxin B. In the kidney, mediates the tubular uptake and clearance of leptin. Also mediates transport of leptin across the blood-brain barrier through endocytosis at the choroid plexus epithelium. Endocytosis of leptin in neuronal cells is required for hypothalamic leptin signaling and leptin-mediated regulation of feeding and body weight. Mediates endocytosis and subsequent lysosomal degradation of CST3 in kidney proximal tubule cells. Mediates renal uptake of 25-hydroxyvitamin D3 in complex with the vitamin D3 transporter GC/DBP. Mediates renal uptake of metallothionein-bound heavy metals. Together with CUBN, mediates renal reabsorption of myoglobin. Mediates renal uptake and subsequent lysosomal degradation of APOM. Plays a role in kidney selenium homeostasis by mediating renal endocytosis of selenoprotein SEPP1. Mediates renal uptake of the antiapoptotic protein BIRC5/survivin which may be important for functional integrity of the kidney. Mediates renal uptake of matrix metalloproteinase MMP2 in complex with metalloproteinase inhibitor TIMP1. Mediates endocytosis of Sonic hedgehog protein N-product (ShhN), the active product of SHH. Also mediates ShhN transcytosis. In the embryonic neuroepithelium, mediates endocytic uptake and degradation of BMP4, is required for correct SHH localization in the ventral neural tube and plays a role in patterning of the ventral telencephalon. Required at the onset of neurulation to sequester SHH on the apical surface of neuroepithelial cells of the rostral diencephalon ventral midline and to control PTCH1-dependent uptake and intracellular trafficking of SHH. During neurulation, required in neuroepithelial cells for uptake of folate bound to the folate receptor FOLR1 which is necessary for neural tube closure. In the adult brain, negatively regulates BMP signaling in the subependymal zone which enables neurogenesis to proceed. In astrocytes, mediates endocytosis of ALB which is required for the synthesis of the neurotrophic factor oleic acid. Involved in neurite branching. During optic nerve development, required for SHH-mediated migration and proliferation of oligodendrocyte precursor cells. Mediates endocytic uptake and clearance of SHH in the retinal margin which protects retinal progenitor cells from mitogenic stimuli and keeps them quiescent. Plays a role in reproductive organ development by mediating uptake in reproductive tissues of androgen and estrogen bound to the sex hormone binding protein SHBG. Mediates endocytosis of angiotensin-2. Also mediates endocytosis of angiotensin 1-7. Binds to the complex composed of beta-amyloid protein 40 and CLU/APOJ and mediates its endocytosis and lysosomal degradation. Required for embryonic heart development. Required for normal hearing, possibly through interaction with estrogen in the inner ear. In Mus musculus (Mouse), this protein is Low-density lipoprotein receptor-related protein 2 (Lrp2).